The following is a 158-amino-acid chain: Phosphopantetheine adenylyltransferase (158 aa).

Thr-9 is a binding site for substrate. Residues 9–10 (TF) and His-17 contribute to the ATP site. Substrate contacts are provided by Lys-41, Leu-73, and Arg-87. ATP-binding positions include 88–90 (GVR), Glu-98, and 123–129 (WSYVSST).

It belongs to the bacterial CoaD family. As to quaternary structure, homohexamer. Mg(2+) is required as a cofactor.

It is found in the cytoplasm. It carries out the reaction (R)-4'-phosphopantetheine + ATP + H(+) = 3'-dephospho-CoA + diphosphate. It functions in the pathway cofactor biosynthesis; coenzyme A biosynthesis; CoA from (R)-pantothenate: step 4/5. Functionally, reversibly transfers an adenylyl group from ATP to 4'-phosphopantetheine, yielding dephospho-CoA (dPCoA) and pyrophosphate. The protein is Phosphopantetheine adenylyltransferase of Histophilus somni (strain 129Pt) (Haemophilus somnus).